Here is a 386-residue protein sequence, read N- to C-terminus: MKIHEYQAKQLFRKYSIPVPEGLLCTNLQEVKTALKSLQLPIAVKAQIHAGGRGKGGGVKLGKTATEVVQYADDILGMSLVTAQTGPSGRTVSKILLEEGVSIARELYLSILVDRERACITIIACQDGGMNIEEVAASTPERIGKIHINPLIGPRSYHINQAREWLNIAQEQARAFSLFIHALYKLFLDYDCSMVEINPLIITEDNQLIALDAKVDTDSNALFRQRELQKMHDPAEDDPAEAEAAKFNLNYIKLSGNVGNMVNGAGLAMATMDIIKRAGAEPANFLDVGGSADAERIENGFRIILADTNVKAILINIFGGILRCDILAQGVVQAAAKVSLQVPVVIRMEGTNVKEGREILAKSGLSLINATDLNDAAEKISTLLTD.

One can recognise an ATP-grasp domain in the interval 9-243 (KQLFRKYSIP…PAEDDPAEAE (235 aa)). Residues Lys-45, 52–54 (GRG), Glu-98, Val-101, and Glu-106 contribute to the ATP site. Mg(2+) is bound by residues Asn-198 and Asp-212. Residues Asn-263 and 320 to 322 (GIL) each bind substrate.

The protein belongs to the succinate/malate CoA ligase beta subunit family. In terms of assembly, heterotetramer of two alpha and two beta subunits. It depends on Mg(2+) as a cofactor.

The catalysed reaction is succinate + ATP + CoA = succinyl-CoA + ADP + phosphate. It catalyses the reaction GTP + succinate + CoA = succinyl-CoA + GDP + phosphate. It functions in the pathway carbohydrate metabolism; tricarboxylic acid cycle; succinate from succinyl-CoA (ligase route): step 1/1. In terms of biological role, succinyl-CoA synthetase functions in the citric acid cycle (TCA), coupling the hydrolysis of succinyl-CoA to the synthesis of either ATP or GTP and thus represents the only step of substrate-level phosphorylation in the TCA. The beta subunit provides nucleotide specificity of the enzyme and binds the substrate succinate, while the binding sites for coenzyme A and phosphate are found in the alpha subunit. The chain is Succinate--CoA ligase [ADP-forming] subunit beta from Desulfotalea psychrophila (strain LSv54 / DSM 12343).